Here is a 464-residue protein sequence, read N- to C-terminus: Flavin-containing monooxygenase FMO GS-OX-like 7 (464 aa).

18 to 23 (GAGAAG) is an FAD binding site. Residue 214 to 219 (GSSVSG) participates in NADP(+) binding.

This sequence belongs to the FMO family. Requires FAD as cofactor.

Functionally, catalyzes the conversion of methylthioalkyl glucosinolates of any chain length into methylsulfinylalkyl glucosinolates. The sequence is that of Flavin-containing monooxygenase FMO GS-OX-like 7 from Arabidopsis thaliana (Mouse-ear cress).